The sequence spans 384 residues: Zinc transporter 7 (384 aa).

The first 25 residues, Met-1–Ala-25, serve as a signal peptide directing secretion. Residues Glu-26–Lys-46 are Extracellular-facing. A helical transmembrane segment spans residues Gly-47–Gly-67. The Cytoplasmic portion of the chain corresponds to Arg-68 to Ala-79. Residues Phe-80–Leu-100 traverse the membrane as a helical segment. Topologically, residues His-101–Ser-119 are extracellular. A helical transmembrane segment spans residues Phe-120 to Leu-140. Residues Ala-141 to Arg-227 lie on the Cytoplasmic side of the membrane. Residues Asp-185–Val-222 are disordered. Over residues Ser-195–Gly-205 the composition is skewed to basic residues. Residues Ser-228 to Leu-248 traverse the membrane as a helical segment. The Extracellular portion of the chain corresponds to Ser-249 to Pro-261. A helical transmembrane segment spans residues Leu-262–Ala-282. Residues Gln-283–Ala-291 lie on the Cytoplasmic side of the membrane. Residues Ala-292–Val-312 form a helical membrane-spanning segment. Residues Ala-313–Ala-323 lie on the Extracellular side of the membrane. A helical transmembrane segment spans residues Leu-324 to Val-344. The Cytoplasmic portion of the chain corresponds to Asp-345 to Gln-363. A helical transmembrane segment spans residues Val-364–Ala-384.

This sequence belongs to the ZIP transporter (TC 2.A.5) family.

It localises to the cell membrane. Functionally, zinc transporter that may be involved in zinc uptake from the rhizosphere. This chain is Zinc transporter 7 (ZIP7), found in Oryza sativa subsp. japonica (Rice).